The following is a 231-amino-acid chain: Flagellar L-ring protein (231 aa).

An N-terminal signal peptide occupies residues Met1–Gly18. Cys19 is lipidated: N-palmitoyl cysteine. Cys19 is lipidated: S-diacylglycerol cysteine.

The protein belongs to the FlgH family. As to quaternary structure, the basal body constitutes a major portion of the flagellar organelle and consists of four rings (L,P,S, and M) mounted on a central rod.

The protein localises to the cell outer membrane. The protein resides in the bacterial flagellum basal body. Assembles around the rod to form the L-ring and probably protects the motor/basal body from shearing forces during rotation. This is Flagellar L-ring protein from Pseudomonas putida (strain W619).